A 79-amino-acid polypeptide reads, in one-letter code: Crassicorin-I (79 aa).

Positions 1-19 (MKLFLVSIVLVGMLVLAAA) are cleaved as a signal peptide. A propeptide spanning residues 20–39 (RPERDIDSFDEQEEKGFVKR) is cleaved from the precursor. 3 cysteine pairs are disulfide-bonded: cysteine 43–cysteine 76, cysteine 45–cysteine 69, and cysteine 59–cysteine 77.

It belongs to the sea anemone type 3 (BDS) potassium channel toxin family. As to expression, highly expressed by the mesenteries. Moderately expressed by the pharynx. Weakly expressed by the gonad and pedal disk. No expression in tentacle.

The protein localises to the secreted. It localises to the nematocyst. Its function is as follows. Peptide with both antimicrobial and neurotoxin activities. Cationic AMP with antibacterial activity against both Gram-positive bacteria (B.subtilis, MIC=11.49 ug/mL) and Gram-negative bacteria (E.coli (MIC=12.21 ug/mL) and S.enterica (MIC=11.95 ug/mL)). Shows no significant antimicrobial activity against bacteria S.aureus and P.aeruginosa, as well as the fungus C.albicans. In vivo, induces reversible paralytic activity towards the shrimp P.paucidens. May act by impairing sodium or potassium channels in the prey. The chain is Crassicorin-I from Urticina crassicornis (Mottled anemone).